The sequence spans 297 residues: Protoheme IX farnesyltransferase 1 (297 aa).

9 helical membrane-spanning segments follow: residues 23 to 43 (VVVL…RAGV), 45 to 65 (WSVL…AAVV), 93 to 113 (LPAL…LLVF), 117 to 137 (LTAW…TGFL), 145 to 165 (IVIG…AVSG), 171 to 191 (PLLL…ALAI), 216 to 236 (LHIL…YAIH), 241 to 261 (LYLA…WVLY), and 277 to 297 (IGYL…LLSL).

The protein belongs to the UbiA prenyltransferase family. Protoheme IX farnesyltransferase subfamily.

The protein resides in the cell inner membrane. The enzyme catalyses heme b + (2E,6E)-farnesyl diphosphate + H2O = Fe(II)-heme o + diphosphate. The protein operates within porphyrin-containing compound metabolism; heme O biosynthesis; heme O from protoheme: step 1/1. Converts heme B (protoheme IX) to heme O by substitution of the vinyl group on carbon 2 of heme B porphyrin ring with a hydroxyethyl farnesyl side group. The protein is Protoheme IX farnesyltransferase 1 of Pseudomonas putida (strain ATCC 700007 / DSM 6899 / JCM 31910 / BCRC 17059 / LMG 24140 / F1).